Reading from the N-terminus, the 68-residue chain is Alpha-conotoxin Lp1.1 (68 aa).

The signal sequence occupies residues Met1–Thr21. A propeptide spanning residues Phe22–Arg48 is cleaved from the precursor. 2 disulfides stabilise this stretch: Cys50-Cys56 and Cys51-Cys64. Residues Ala52–Ala54 are lacks the Ser-Xaa-Pro motif that is crucial for potent interaction with nAChR. Gly65 carries the glycine amide modification. The propeptide occupies Gly66–Arg68.

The protein belongs to the conotoxin A superfamily. As to expression, expressed by the venom duct.

It localises to the secreted. Alpha-conotoxins act on postsynaptic membranes, they bind to the nicotinic acetylcholine receptors (nAChR) and thus inhibit them. Synthetic peptide inhibits alpha-6/alpha-3/beta-2 and alpha-3/beta-2 nicotinic acetylcholine receptors and causes uncoordinated movement when intramuscularly injected into goldfish. Has a distinct nAChR binding mode from other alpha-conotoxins, due to a different three residue motif (Ala-Xaa-Ala instead of the conserved Ser-Xaa-Pro motif). The polypeptide is Alpha-conotoxin Lp1.1 (Conus leopardus (Leopard cone)).